The chain runs to 482 residues: Type II methyltransferase M.AvaI (482 aa).

It belongs to the N(4)/N(6)-methyltransferase family. N(4) subfamily.

The catalysed reaction is a 2'-deoxycytidine in DNA + S-adenosyl-L-methionine = an N(4)-methyl-2'-deoxycytidine in DNA + S-adenosyl-L-homocysteine + H(+). Functionally, an alpha subtype methylase that recognizes the double-stranded sequence 5'-CYCGRG-3', methylates C-1 on both strands, and protects the DNA from cleavage by the AvaI endonuclease. This is Type II methyltransferase M.AvaI from Anabaena variabilis.